We begin with the raw amino-acid sequence, 903 residues long: KAT8 regulatory NSL complex subunit 1-like protein (903 aa).

Disordered stretches follow at residues 319 to 343, 419 to 441, and 652 to 676; these read DSDA…DECN, MPKS…PSSP, and TECT…HRSE. 2 stretches are compositionally biased toward polar residues: residues 423–441 and 652–661; these read PQGT…PSSP and TECTSSYSPD. In terms of domain architecture, PEHE spans 748–862; the sequence is EIITPSWKEV…ESPKGKTIHW (115 aa).

This chain is KAT8 regulatory NSL complex subunit 1-like protein (kansl1l), found in Xenopus tropicalis (Western clawed frog).